Reading from the N-terminus, the 114-residue chain is Histone H2B (114 aa).

Residues 1–22 form a disordered region; the sequence is MAKTPSKKAAKAPKKAGSKRNK. Position 3 is an N6-acetyllysine (Lys-3). Lys-110 is covalently cross-linked (Glycyl lysine isopeptide (Lys-Gly) (interchain with G-Cter in ubiquitin)).

Belongs to the histone H2B family. In terms of assembly, the nucleosome is a histone octamer containing two molecules each of H2A, H2B, H3 and H4 assembled in one H3-H4 heterotetramer and two H2A-H2B heterodimers. The octamer wraps approximately 147 bp of DNA. Post-translationally, monoubiquitination of Lys-110 gives a specific tag for epigenetic transcriptional activation and is also prerequisite for histone H3 'Lys-4' and 'Lys-79' methylation.

It is found in the nucleus. The protein localises to the chromosome. Its function is as follows. Core component of nucleosome. Nucleosomes wrap and compact DNA into chromatin, limiting DNA accessibility to the cellular machineries which require DNA as a template. Histones thereby play a central role in transcription regulation, DNA repair, DNA replication and chromosomal stability. DNA accessibility is regulated via a complex set of post-translational modifications of histones, also called histone code, and nucleosome remodeling. This Olisthodiscus luteus (Marine phytoflagellate) protein is Histone H2B.